The sequence spans 508 residues: Photosystem II CP47 reaction center protein (508 aa).

6 helical membrane passes run 21–36, 101–115, 140–156, 203–218, 237–252, and 457–472; these read SVHI…WAGS, IVFS…IWHW, GIHL…FGAF, IAAG…FHLS, VLSS…AFVV, and SFAL…HGAR.

This sequence belongs to the PsbB/PsbC family. PsbB subfamily. PSII is composed of 1 copy each of membrane proteins PsbA, PsbB, PsbC, PsbD, PsbE, PsbF, PsbH, PsbI, PsbJ, PsbK, PsbL, PsbM, PsbT, PsbX, PsbY, PsbZ, Psb30/Ycf12, at least 3 peripheral proteins of the oxygen-evolving complex and a large number of cofactors. It forms dimeric complexes. It depends on Binds multiple chlorophylls. PSII binds additional chlorophylls, carotenoids and specific lipids. as a cofactor.

It is found in the plastid. It localises to the chloroplast thylakoid membrane. Its function is as follows. One of the components of the core complex of photosystem II (PSII). It binds chlorophyll and helps catalyze the primary light-induced photochemical processes of PSII. PSII is a light-driven water:plastoquinone oxidoreductase, using light energy to abstract electrons from H(2)O, generating O(2) and a proton gradient subsequently used for ATP formation. This Carica papaya (Papaya) protein is Photosystem II CP47 reaction center protein.